The sequence spans 308 residues: Aspartate carbamoyltransferase catalytic subunit (308 aa).

Positions 57 and 58 each coordinate carbamoyl phosphate. Lys86 lines the L-aspartate pocket. Residues Arg107, His135, and Gln138 each coordinate carbamoyl phosphate. The L-aspartate site is built by Arg168 and Arg229. Carbamoyl phosphate contacts are provided by Leu268 and Pro269.

Belongs to the aspartate/ornithine carbamoyltransferase superfamily. ATCase family. As to quaternary structure, heterooligomer of catalytic and regulatory chains.

The catalysed reaction is carbamoyl phosphate + L-aspartate = N-carbamoyl-L-aspartate + phosphate + H(+). Its pathway is pyrimidine metabolism; UMP biosynthesis via de novo pathway; (S)-dihydroorotate from bicarbonate: step 2/3. In terms of biological role, catalyzes the condensation of carbamoyl phosphate and aspartate to form carbamoyl aspartate and inorganic phosphate, the committed step in the de novo pyrimidine nucleotide biosynthesis pathway. This Pyrococcus horikoshii (strain ATCC 700860 / DSM 12428 / JCM 9974 / NBRC 100139 / OT-3) protein is Aspartate carbamoyltransferase catalytic subunit.